We begin with the raw amino-acid sequence, 169 residues long: S-ribosylhomocysteine lyase (169 aa).

3 residues coordinate Fe cation: H54, H58, and C128.

The protein belongs to the LuxS family. In terms of assembly, homodimer. Fe cation is required as a cofactor.

The catalysed reaction is S-(5-deoxy-D-ribos-5-yl)-L-homocysteine = (S)-4,5-dihydroxypentane-2,3-dione + L-homocysteine. Functionally, involved in the synthesis of autoinducer 2 (AI-2) which is secreted by bacteria and is used to communicate both the cell density and the metabolic potential of the environment. The regulation of gene expression in response to changes in cell density is called quorum sensing. Catalyzes the transformation of S-ribosylhomocysteine (RHC) to homocysteine (HC) and 4,5-dihydroxy-2,3-pentadione (DPD). This chain is S-ribosylhomocysteine lyase, found in Shewanella oneidensis (strain ATCC 700550 / JCM 31522 / CIP 106686 / LMG 19005 / NCIMB 14063 / MR-1).